The sequence spans 197 residues: Phosphoheptose isomerase (197 aa).

The SIS domain occupies 34–196 (MVNCLLGGNK…DRTLFPQDEQ (163 aa)). 49–51 (NGG) lines the substrate pocket. Residues histidine 58 and glutamate 62 each contribute to the Zn(2+) site. Substrate is bound by residues glutamate 62, 91–92 (ND), 117–119 (STS), serine 122, and glutamine 172. Residues glutamine 172 and histidine 180 each coordinate Zn(2+).

Belongs to the SIS family. GmhA subfamily. As to quaternary structure, homotetramer. Zn(2+) is required as a cofactor.

The protein localises to the cytoplasm. The catalysed reaction is 2 D-sedoheptulose 7-phosphate = D-glycero-alpha-D-manno-heptose 7-phosphate + D-glycero-beta-D-manno-heptose 7-phosphate. It participates in carbohydrate biosynthesis; D-glycero-D-manno-heptose 7-phosphate biosynthesis; D-glycero-alpha-D-manno-heptose 7-phosphate and D-glycero-beta-D-manno-heptose 7-phosphate from sedoheptulose 7-phosphate: step 1/1. Its function is as follows. Catalyzes the isomerization of sedoheptulose 7-phosphate in D-glycero-D-manno-heptose 7-phosphate. The protein is Phosphoheptose isomerase of Shewanella pealeana (strain ATCC 700345 / ANG-SQ1).